The following is a 467-amino-acid chain: Uronate isomerase (467 aa).

This sequence belongs to the metallo-dependent hydrolases superfamily. Uronate isomerase family.

It catalyses the reaction D-glucuronate = D-fructuronate. The enzyme catalyses aldehydo-D-galacturonate = keto-D-tagaturonate. It participates in carbohydrate metabolism; pentose and glucuronate interconversion. This Mannheimia succiniciproducens (strain KCTC 0769BP / MBEL55E) protein is Uronate isomerase.